The following is a 341-amino-acid chain: Radial spoke head 14 homolog (341 aa).

ARM repeat units lie at residues 16-55 (PTKA…DLMH), 57-96 (PEYV…IMAT), 99-138 (VGRV…LAQL), 139-178 (PKGA…LCLQ), 180-217 (DATE…AISI), 219-258 (LDGK…HATV), 260-300 (TEGK…MLAE), and 302-339 (PEGR…VIEW).

This sequence belongs to the flagellar radial spoke RSP14 family. Component of the axonemal radial spoke complex 1 (RS1), at least composed of spoke head proteins RSPH1, RSPH3, RSPH9 and the cilia-specific component RSPH4A or sperm-specific component RSPH6A, spoke stalk proteins RSPH14, DNAJB13, DYDC1, ROPN1L and NME5, and the anchor protein IQUB.

It is found in the cytoplasm. It localises to the cytoskeleton. Its subcellular location is the flagellum axoneme. Functionally, functions as part of axonemal radial spoke complexes that play an important part in the motility of sperm and cilia. The polypeptide is Radial spoke head 14 homolog (Mus musculus (Mouse)).